A 95-amino-acid polypeptide reads, in one-letter code: Small ubiquitin-related modifier 4 (95 aa).

Positions 17–95 (HINLKVAGQD…VFQQPTGGVY (79 aa)) constitute a Ubiquitin-like domain. A Glycyl lysine isopeptide (Gly-Lys) (interchain with K-? in acceptor proteins) cross-link involves residue glycine 93. The propeptide occupies 94–95 (VY).

It belongs to the ubiquitin family. SUMO subfamily. Interacts with SAE2. Covalently attached to a number of proteins. In contrast to SUMO1, SUMO2 and SUMO3, seems to be insensitive to sentrin-specific proteases due to the presence of Pro-90. This may impair processing to mature form and conjugation to substrates. In terms of tissue distribution, expressed mainly in adult and embryonic kidney. Expressed at various levels in immune tissues, with the highest expression in the lymph node and spleen.

In terms of biological role, ubiquitin-like protein which can be covalently attached to target lysines as a monomer. Does not seem to be involved in protein degradation and may modulate protein subcellular localization, stability or activity. Upon oxidative stress, conjugates to various anti-oxidant enzymes, chaperones, and stress defense proteins. May also conjugate to NFKBIA, TFAP2A and FOS, negatively regulating their transcriptional activity, and to NR3C1, positively regulating its transcriptional activity. Covalent attachment to its substrates requires prior activation by the E1 complex SAE1-SAE2 and linkage to the E2 enzyme UBE2I. The protein is Small ubiquitin-related modifier 4 (SUMO4) of Homo sapiens (Human).